A 166-amino-acid chain; its full sequence is MFPTVTEFMNYGQQTVRAARYIGQGFMITLSHANRLPVTIQYPYEKLITSERFRGRIHFEFDKCIACEVCVRVCPIDLPVVDWKLETDIRKKRLLNYSIDFGICIFCGNCVEYCPTNCLSMTEEYELSTYDRHELNYNQIALGRLPMSIIDDYTIRTILNLPEIKT.

4Fe-4S ferredoxin-type domains follow at residues 55-84 (GRIH…VDWK) and 95-124 (LNYS…MTEE). [4Fe-4S] cluster-binding residues include Cys64, Cys67, Cys70, Cys74, Cys104, Cys107, Cys110, and Cys114.

It belongs to the complex I 23 kDa subunit family. NDH is composed of at least 16 different subunits, 5 of which are encoded in the nucleus. [4Fe-4S] cluster serves as cofactor.

The protein localises to the plastid. The protein resides in the chloroplast thylakoid membrane. The catalysed reaction is a plastoquinone + NADH + (n+1) H(+)(in) = a plastoquinol + NAD(+) + n H(+)(out). It carries out the reaction a plastoquinone + NADPH + (n+1) H(+)(in) = a plastoquinol + NADP(+) + n H(+)(out). Functionally, NDH shuttles electrons from NAD(P)H:plastoquinone, via FMN and iron-sulfur (Fe-S) centers, to quinones in the photosynthetic chain and possibly in a chloroplast respiratory chain. The immediate electron acceptor for the enzyme in this species is believed to be plastoquinone. Couples the redox reaction to proton translocation, and thus conserves the redox energy in a proton gradient. The chain is NAD(P)H-quinone oxidoreductase subunit I, chloroplastic from Sigesbeckia blakei.